The chain runs to 183 residues: Dual-action ribosomal maturation protein DarP (183 aa).

The interval 1–23 is disordered; that stretch reads MTKQPDDWLDEVPDNENDDDDDE. The span at 7–23 shows a compositional bias: acidic residues; sequence DWLDEVPDNENDDDDDE.

The protein belongs to the DarP family.

It localises to the cytoplasm. Member of a network of 50S ribosomal subunit biogenesis factors which assembles along the 30S-50S interface, preventing incorrect 23S rRNA structures from forming. Promotes peptidyl transferase center (PTC) maturation. The sequence is that of Dual-action ribosomal maturation protein DarP from Cronobacter sakazakii (strain ATCC BAA-894) (Enterobacter sakazakii).